We begin with the raw amino-acid sequence, 281 residues long: MTSYENHQALHGLTLGKSTDYRDVYDASLLQPVPRSLNRDPLGLRADALPFHGADIWTMYELSWLNRNGLPQVAIGQVEINATSVNLVESKSFKLYLNSFNQTQFESLEAVRETLERDLRACAQGDVSVTLRRLEDVEGEPVARFSGDCIDNQDINITDYEFDAALLSGAAGEETVEETLVSHLLKSNCLITHQPDWGSVQIHYRGPKICREKLLRYLVSFRHHNEFHEQCVERIFNDITRFCQPEQLSVYARYTRRGGLDINPWRSNGDFTPATGRLARQ.

88–90 (VES) serves as a coordination point for substrate. Position 90–91 (90–91 (SK)) interacts with NADPH. Cysteine 189 functions as the Thioimide intermediate in the catalytic mechanism. The active-site Proton donor is aspartate 196. 228–229 (HE) lines the substrate pocket. 257–258 (RG) serves as a coordination point for NADPH.

This sequence belongs to the GTP cyclohydrolase I family. QueF type 2 subfamily. As to quaternary structure, homodimer.

Its subcellular location is the cytoplasm. It carries out the reaction 7-aminomethyl-7-carbaguanine + 2 NADP(+) = 7-cyano-7-deazaguanine + 2 NADPH + 3 H(+). Its pathway is tRNA modification; tRNA-queuosine biosynthesis. Catalyzes the NADPH-dependent reduction of 7-cyano-7-deazaguanine (preQ0) to 7-aminomethyl-7-deazaguanine (preQ1). This Cronobacter sakazakii (strain ATCC BAA-894) (Enterobacter sakazakii) protein is NADPH-dependent 7-cyano-7-deazaguanine reductase.